Reading from the N-terminus, the 478-residue chain is F-box/kelch-repeat protein At1g51550 (478 aa).

The segment at 1-20 (MAAESTRNSSPPSTSQSSSP) is disordered. Positions 9–20 (SSPPSTSQSSSP) are enriched in low complexity. Positions 18 to 64 (SSPIINLPDDHLLTILLLLPVDSILSFSMTCKRYKSLACSDSLWEAL) constitute an F-box domain. Kelch repeat units follow at residues 135-187 (LVLF…VIGE) and 246-299 (KMVV…CIRE).

The protein is F-box/kelch-repeat protein At1g51550 of Arabidopsis thaliana (Mouse-ear cress).